The sequence spans 186 residues: Lipid A acyltransferase PagP (186 aa).

The signal sequence occupies residues 1-19 (MKRLISCLTIICALNRSAA). Residues His60, Asp103, and Ser104 contribute to the active site.

Belongs to the lipid A palmitoyltransferase family. Homodimer.

The protein localises to the cell outer membrane. The enzyme catalyses a lipid A + a 1,2-diacyl-sn-glycero-3-phosphocholine = a hepta-acyl lipid A + a 2-acyl-sn-glycero-3-phosphocholine. It catalyses the reaction a lipid IVA + a 1,2-diacyl-sn-glycero-3-phosphocholine = a lipid IVB + a 2-acyl-sn-glycero-3-phosphocholine. It carries out the reaction a lipid IIA + a 1,2-diacyl-sn-glycero-3-phosphocholine = a lipid IIB + a 2-acyl-sn-glycero-3-phosphocholine. In terms of biological role, transfers a fatty acid residue from the sn-1 position of a phospholipid to the N-linked hydroxyfatty acid chain on the proximal unit of lipid A or its precursors. Confers resistance to cationic antimicrobial peptides (CAMPs). Promotes the ability of L.pneumophila to replicate and/or survive in macrophages. Important for ability to kill macrophages and to promote the virulence. This is Lipid A acyltransferase PagP from Legionella pneumophila.